We begin with the raw amino-acid sequence, 464 residues long: Fumarate hydratase class II (464 aa).

Substrate is bound by residues Ser100–Thr102, His131–Asp134, Ser141–Asn143, and Thr189. His190 functions as the Proton donor/acceptor in the catalytic mechanism. Ser320 is a catalytic residue. Residues Ser321 and Lys326–Asn328 contribute to the substrate site.

Belongs to the class-II fumarase/aspartase family. Fumarase subfamily. As to quaternary structure, homotetramer.

Its subcellular location is the cytoplasm. The catalysed reaction is (S)-malate = fumarate + H2O. It participates in carbohydrate metabolism; tricarboxylic acid cycle; (S)-malate from fumarate: step 1/1. Its function is as follows. Involved in the TCA cycle. Catalyzes the stereospecific interconversion of fumarate to L-malate. The polypeptide is Fumarate hydratase class II (Deinococcus radiodurans (strain ATCC 13939 / DSM 20539 / JCM 16871 / CCUG 27074 / LMG 4051 / NBRC 15346 / NCIMB 9279 / VKM B-1422 / R1)).